The primary structure comprises 365 residues: MTENHYLLLTPGPLTTTKTVKEVMLYDWCTWDVEYNMMVQQVRAKLVSLATKEEERYTTVLMQGSGTFSVEAVIGSVIPKNGKMLVCTNGAYGKRIVQMAEMLHIDVVVSQTEEWEPTNIVEVEKILQQDKEITHIAVVHCETTTGIINPIVDVCKLGKQYGKVTLVDAMSSFGGIEIDIAELQIDFLISSANKCIQGVPGFGFVIAKRDELLKCKGQARSLSLDLYDQWETMENQNGKWRFTSPTHVVHAFYQALLELEKEGGVKARYNRYDNNQKLLVNRMREIGFKPLVDEKYQSPIITSFIYPEEWFDFEQLYNELKRDGFVIYPGKISKVDTFRIGNIGDVHEADIHRLVDSIAKGVVIG.

Position 194 is an N6-(pyridoxal phosphate)lysine (lysine 194).

This sequence belongs to the class-V pyridoxal-phosphate-dependent aminotransferase family. PhnW subfamily. In terms of assembly, homodimer. Pyridoxal 5'-phosphate serves as cofactor.

The enzyme catalyses (2-aminoethyl)phosphonate + pyruvate = phosphonoacetaldehyde + L-alanine. Functionally, involved in phosphonate degradation. This Bacillus cereus (strain Q1) protein is 2-aminoethylphosphonate--pyruvate transaminase.